The chain runs to 96 residues: Molybdopterin synthase sulfur carrier subunit (96 aa).

G96 carries the 1-thioglycine; alternate modification. Glycyl adenylate; alternate is present on G96.

The protein belongs to the MoaD family. MOCS2A subfamily. As to quaternary structure, heterotetramer; composed of 2 small (MOCS2A) and 2 large (MOCS2B) subunits. C-terminal thiocarboxylation occurs in 2 steps, it is first acyl-adenylated (-COAMP) via the hesA/moeB/thiF part of UBA4, then thiocarboxylated (-COSH) via the rhodanese domain of UBA4.

Its subcellular location is the cytoplasm. It functions in the pathway cofactor biosynthesis; molybdopterin biosynthesis. Its function is as follows. Acts as a sulfur carrier required for molybdopterin biosynthesis. Component of the molybdopterin synthase complex that catalyzes the conversion of precursor Z into molybdopterin by mediating the incorporation of 2 sulfur atoms into precursor Z to generate a dithiolene group. In the complex, serves as sulfur donor by being thiocarboxylated (-COSH) at its C-terminus by UBA4. After interaction with MOCS2B, the sulfur is then transferred to precursor Z to form molybdopterin. The chain is Molybdopterin synthase sulfur carrier subunit from Phaeosphaeria nodorum (strain SN15 / ATCC MYA-4574 / FGSC 10173) (Glume blotch fungus).